A 330-amino-acid polypeptide reads, in one-letter code: Major ferric iron-binding protein (330 aa).

The signal sequence occupies residues 1 to 22 (MKTSIRYALLAAALTAATPALA). 4 residues coordinate Fe cation: His31, Glu79, Tyr217, and Tyr218.

Belongs to the bacterial solute-binding protein 1 family.

It is found in the periplasm. In terms of biological role, this protein may be a central component in the iron-acquisition system. The protein is Major ferric iron-binding protein (fbp) of Neisseria gonorrhoeae.